We begin with the raw amino-acid sequence, 302 residues long: MTVAKLSINLSGLEFENPLILASGINDKVPEQWIRAHEEGAGGVVTKSIGIEPRKGYDNPTIVELPYGLINAMGLPNPGWKGFLEMVEGYSFDFPLIVSIFGGTPEEFAFLAEKLSEVADAFELNLSCPHAKGYGMEIGQKPENVYAVVKAVKDATDKPVIAKLTPNIDDITKLGLAAENAGADAVSAINTLKAIAIDIYARKPILSNKVGGYSGPGVKPVALRAVYDLARTLDIPVIGIGGITTWQDAVEFLLAGASALQIGTAVSLRGWKVFREINEGIERYLREEGFSSVEEIVGLALE.

Residues Ser23 and 47–48 (KS) each bind FMN. Residues Lys47, 71 to 75 (NAMGL), and Asn125 each bind substrate. Residue Asn125 participates in FMN binding. The active-site Nucleophile is Cys128. Positions 163 and 189 each coordinate FMN. 190-191 (NT) provides a ligand contact to substrate. FMN is bound by residues Gly215, 241-242 (GG), and 263-264 (GT).

The protein belongs to the dihydroorotate dehydrogenase family. Type 1 subfamily. In terms of assembly, heterotetramer of 2 PyrK and 2 PyrD type B subunits. FMN serves as cofactor.

It is found in the cytoplasm. It catalyses the reaction (S)-dihydroorotate + NAD(+) = orotate + NADH + H(+). It functions in the pathway pyrimidine metabolism; UMP biosynthesis via de novo pathway; orotate from (S)-dihydroorotate (NAD(+) route): step 1/1. Functionally, catalyzes the conversion of dihydroorotate to orotate with NAD(+) as electron acceptor. This chain is Dihydroorotate dehydrogenase B (NAD(+)), catalytic subunit (pyrD), found in Thermococcus kodakarensis (strain ATCC BAA-918 / JCM 12380 / KOD1) (Pyrococcus kodakaraensis (strain KOD1)).